The primary structure comprises 148 residues: Ribosomal RNA large subunit methyltransferase H (148 aa).

S-adenosyl-L-methionine contacts are provided by residues Leu62, Gly94, and Leu113–Leu118.

The protein belongs to the RNA methyltransferase RlmH family. Homodimer.

It localises to the cytoplasm. The enzyme catalyses pseudouridine(1915) in 23S rRNA + S-adenosyl-L-methionine = N(3)-methylpseudouridine(1915) in 23S rRNA + S-adenosyl-L-homocysteine + H(+). Specifically methylates the pseudouridine at position 1915 (m3Psi1915) in 23S rRNA. This chain is Ribosomal RNA large subunit methyltransferase H, found in Deinococcus geothermalis (strain DSM 11300 / CIP 105573 / AG-3a).